The chain runs to 117 residues: Replication initiation control protein YabA (117 aa).

Zn(2+) contacts are provided by histidine 87, cysteine 89, cysteine 103, and cysteine 106.

This sequence belongs to the YabA family. Homotetramer. Interacts with both DnaA and DnaN, acting as a bridge between these two proteins. It depends on Zn(2+) as a cofactor.

It is found in the cytoplasm. The protein resides in the nucleoid. In terms of biological role, involved in control of chromosome replication initiation. Inhibits the cooperative binding of DnaA to the oriC region, thus negatively regulating initiation of chromosome replication. Inhibits the ability of DnaA-ATP to form a helix on DNA; does not disassemble preformed DnaA-DNA helices. Decreases the residence time of DnaA on the chromosome at its binding sites (oriC, replication forks and promoter-binding sites). Tethers DnaA to the replication machinery via the DNA polymerase beta sliding clamp subunit (dnaN). Associates with oriC and other DnaA targets on the chromosome in a DnaA-dependent manner. In Latilactobacillus sakei subsp. sakei (strain 23K) (Lactobacillus sakei subsp. sakei), this protein is Replication initiation control protein YabA.